Reading from the N-terminus, the 105-residue chain is Large ribosomal subunit protein eL36 (105 aa).

It belongs to the eukaryotic ribosomal protein eL36 family. Component of the large ribosomal subunit.

It is found in the cytoplasm. Its subcellular location is the cytosol. In terms of biological role, component of the large ribosomal subunit. The ribosome is a large ribonucleoprotein complex responsible for the synthesis of proteins in the cell. The sequence is that of Large ribosomal subunit protein eL36 (RPL36) from Hydrophis hardwickii (Hardwick's spine-bellied seasnake).